The chain runs to 370 residues: 3-isopropylmalate dehydrogenase (370 aa).

77 to 90 (GPKWDAVPYDARPE) is a binding site for NAD(+). The substrate site is built by R97, R107, R135, and D226. Mg(2+) contacts are provided by D226, D250, and D254. Residue 290-302 (GSAPDIAGKGLAN) participates in NAD(+) binding.

It belongs to the isocitrate and isopropylmalate dehydrogenases family. LeuB type 1 subfamily. Homodimer. Requires Mg(2+) as cofactor. Mn(2+) is required as a cofactor.

It is found in the cytoplasm. The enzyme catalyses (2R,3S)-3-isopropylmalate + NAD(+) = 4-methyl-2-oxopentanoate + CO2 + NADH. Its pathway is amino-acid biosynthesis; L-leucine biosynthesis; L-leucine from 3-methyl-2-oxobutanoate: step 3/4. Catalyzes the oxidation of 3-carboxy-2-hydroxy-4-methylpentanoate (3-isopropylmalate) to 3-carboxy-4-methyl-2-oxopentanoate. The product decarboxylates to 4-methyl-2 oxopentanoate. This Rhodopseudomonas palustris (strain HaA2) protein is 3-isopropylmalate dehydrogenase.